Consider the following 403-residue polypeptide: MLKTDVVVIGAGPAGSMAAKHAALGGANVVLIDKKSEIGTPKRCAEGVYDEGFKWLNIEPDERWIAQRIYGATLHSPDGNSFTVTSEDVPVQGFILERKVFDKHMAMDAARAGAKIMIKTLVTDIKRNENGFILSCDSIEGTIEVEAKIAICADGPESIMAKKLGINSTTPQNMMSCAQFEMCNVDYNDDEKIEFYLGQDVALKGYAWIFPKGNGVANVGLGVTGNTDKTAYEYIMDFIEKCPATKNAQPIEMNIGGDPINGLIEKIYDDNLLICGDAAGQVNPIEGGGIIEGMLGGMAAGDVAAKAIKEENYSKERLHEYYEKYSELSFNLIETLPAARDIVYSFTDDEYNKIISVANTIDLKNISKRDVLKVVFKLPPTLTTKLIKLLKIVFPKQMKSILF.

The FAD site is built by A14, D33, C44, A45, G47, R98, V122, D277, G289, and I290.

It belongs to the geranylgeranyl reductase family. DGGGPL reductase subfamily. Requires FAD as cofactor.

It carries out the reaction a 2,3-bis-O-phytanyl-sn-glycerol 1-phospholipid + 8 A = a 2,3-bis-O-(geranylgeranyl)-sn-glycerol 1-phospholipid + 8 AH2. The enzyme catalyses 2,3-bis-O-(phytanyl)-sn-glycerol 1-phosphate + 8 A = 2,3-bis-O-(geranylgeranyl)-sn-glycerol 1-phosphate + 8 AH2. It catalyses the reaction CDP-2,3-bis-O-(geranylgeranyl)-sn-glycerol + 8 AH2 = CDP-2,3-bis-O-(phytanyl)-sn-glycerol + 8 A. The catalysed reaction is archaetidylserine + 8 AH2 = 2,3-bis-O-phytanyl-sn-glycero-3-phospho-L-serine + 8 A. The protein operates within membrane lipid metabolism; glycerophospholipid metabolism. Functionally, is involved in the reduction of 2,3-digeranylgeranylglycerophospholipids (unsaturated archaeols) into 2,3-diphytanylglycerophospholipids (saturated archaeols) in the biosynthesis of archaeal membrane lipids. Catalyzes the formation of archaetidic acid (2,3-di-O-phytanyl-sn-glyceryl phosphate) from 2,3-di-O-geranylgeranylglyceryl phosphate (DGGGP) via the hydrogenation of each double bond of the isoprenoid chains. Is also probably able to reduce double bonds of geranyl groups in CDP-2,3-bis-O-(geranylgeranyl)-sn-glycerol and archaetidylserine, thus acting at various stages in the biosynthesis of archaeal membrane lipids. This Methanosphaera stadtmanae (strain ATCC 43021 / DSM 3091 / JCM 11832 / MCB-3) protein is Digeranylgeranylglycerophospholipid reductase 1.